A 261-amino-acid polypeptide reads, in one-letter code: DNA oxidative demethylase ALKBH2 (261 aa).

Residues 1-57 (MDRFLVKGAQGGLLRKQEEQEPTGEEPAVLGGDKESTRKRPRREAPGNGGHSAGPSW) are disordered. The PCNA-binding signature appears at 3 to 7 (RFLVK). Residues 102–104 (FGK) and 122–124 (YTF) contribute to the substrate site. Residues 152 to 257 (TFNFVLINRY…RVNLTFRKIL (106 aa)) form the Fe2OG dioxygenase domain. Residues asparagine 159, tyrosine 161, and histidine 171 each contribute to the 2-oxoglutarate site. Residues histidine 171 and aspartate 173 each coordinate Fe cation. Aspartate 174 lines the substrate pocket. 4 residues coordinate 2-oxoglutarate: histidine 236, arginine 248, threonine 252, and arginine 254. Histidine 236 contacts Fe cation.

The protein belongs to the alkB family. As to quaternary structure, interacts with PCNA homotrimer; this interaction is enhanced during the S-phase of the cell cycle. Interacts with nucleolar proteins NCL, UBTF and NPM1. Interacts with XRCC5-XRCC6 heterodimer. Requires Fe(2+) as cofactor. As to expression, detected in colon, small intestine, ovary, testis, prostate, skeletal muscle, heart, liver and urinary bladder.

Its subcellular location is the nucleus. It localises to the nucleolus. It is found in the nucleoplasm. The catalysed reaction is a methylated nucleobase within DNA + 2-oxoglutarate + O2 = a nucleobase within DNA + formaldehyde + succinate + CO2. It carries out the reaction an N(1)-methyl-2'-deoxyadenosine in double-stranded DNA + 2-oxoglutarate + O2 = a 2'-deoxyadenosine in double-stranded DNA + formaldehyde + succinate + CO2 + H(+). The enzyme catalyses an N(1)-methyl-2'-deoxyadenosine in single-stranded DNA + 2-oxoglutarate + O2 = a 2'-deoxyadenosine in single-stranded DNA + formaldehyde + succinate + CO2 + H(+). It catalyses the reaction an N(3)-methyl-2'-deoxycytidine in double-stranded DNA + 2-oxoglutarate + O2 = a 2'-deoxycytidine in double-stranded DNA + formaldehyde + succinate + CO2 + H(+). The catalysed reaction is an N(3)-methyl-2'-deoxycytidine in single-stranded DNA + 2-oxoglutarate + O2 = a 2'-deoxycytidine in single-stranded DNA + formaldehyde + succinate + CO2 + H(+). It carries out the reaction a 1,N(6)-etheno-2'-deoxyadenosine in double-stranded DNA + 2-oxoglutarate + O2 + H2O = a 2'-deoxyadenosine in double-stranded DNA + glyoxal + succinate + CO2. The enzyme catalyses a 1,N(6)-etheno-2'-deoxyadenosine in single-stranded DNA + 2-oxoglutarate + O2 + H2O = a 2'-deoxyadenosine in single-stranded DNA + glyoxal + succinate + CO2. It catalyses the reaction a 3,N(4)-etheno-2'-deoxycytidine in double-stranded DNA + 2-oxoglutarate + O2 + H2O = a 2'-deoxycytidine in double-stranded DNA + glyoxal + succinate + CO2. The catalysed reaction is a 3,N(4)-etheno-2'-deoxycytidine in single-stranded DNA + 2-oxoglutarate + O2 + H2O = a 2'-deoxycytidine in single-stranded DNA + glyoxal + succinate + CO2. It carries out the reaction a 1,N(2)-etheno-2'-deoxyguanosine in double-stranded DNA + 2-oxoglutarate + O2 + H2O = a 2'-deoxyguanosine in double-stranded DNA + glyoxal + succinate + CO2. Activated by ascorbate and magnesium ions. Its function is as follows. Dioxygenase that repairs alkylated nucleic acid bases by direct reversal oxidative dealkylation. Can process both double-stranded (ds) and single-stranded (ss) DNA substrates, with a strong preference for dsDNA. Uses molecular oxygen, 2-oxoglutarate and iron as cofactors to oxidize the alkyl groups that are subsequently released as aldehydes, regenerating the undamaged bases. Probes the base pair stability, locates a weakened base pair and flips the damaged base to accommodate the lesion in its active site for efficient catalysis. Repairs monoalkylated bases, specifically N1-methyladenine and N3-methylcytosine, as well as higher order alkyl adducts such as bases modified with exocyclic bridged adducts known as etheno adducts including 1,N6-ethenoadenine, 3,N4-ethenocytosine and 1,N2-ethenoguanine. Acts as a gatekeeper of genomic integrity under alkylation stress. Efficiently repairs alkylated lesions in ribosomal DNA (rDNA). These lesions can cause ss- and dsDNA strand breaks that severely impair rDNA transcription. In a response mechanism to DNA damage, associates with PCNA at replication forks to repair alkylated adducts prior to replication. In Homo sapiens (Human), this protein is DNA oxidative demethylase ALKBH2 (ALKBH2).